The sequence spans 122 residues: uncharacterized protein (122 aa).

Residues Thr97–Ser122 form a disordered region.

This is an uncharacterized protein from Mycoplasma genitalium (strain ATCC 33530 / DSM 19775 / NCTC 10195 / G37) (Mycoplasmoides genitalium).